A 256-amino-acid polypeptide reads, in one-letter code: Geranylgeranylglyceryl phosphate synthase (256 aa).

Mg(2+)-binding residues include Asp-28 and Ser-53. Residues 172-178, 203-204, and 225-226 contribute to the sn-glycerol 1-phosphate site; these read YLEAGSG, GG, and GT.

It belongs to the GGGP/HepGP synthase family. Group II subfamily. Mg(2+) serves as cofactor.

The protein localises to the cytoplasm. It catalyses the reaction sn-glycerol 1-phosphate + (2E,6E,10E)-geranylgeranyl diphosphate = sn-3-O-(geranylgeranyl)glycerol 1-phosphate + diphosphate. Its pathway is membrane lipid metabolism; glycerophospholipid metabolism. Its function is as follows. Prenyltransferase that catalyzes the transfer of the geranylgeranyl moiety of geranylgeranyl diphosphate (GGPP) to the C3 hydroxyl of sn-glycerol-1-phosphate (G1P). This reaction is the first ether-bond-formation step in the biosynthesis of archaeal membrane lipids. In Methanococcus maripaludis (strain C5 / ATCC BAA-1333), this protein is Geranylgeranylglyceryl phosphate synthase.